The chain runs to 466 residues: Asparagine--tRNA ligase (466 aa).

It belongs to the class-II aminoacyl-tRNA synthetase family. In terms of assembly, homodimer.

It is found in the cytoplasm. The enzyme catalyses tRNA(Asn) + L-asparagine + ATP = L-asparaginyl-tRNA(Asn) + AMP + diphosphate + H(+). This chain is Asparagine--tRNA ligase, found in Shewanella sp. (strain MR-7).